The sequence spans 437 residues: UDP-N-acetylmuramoylalanine--D-glutamate ligase (437 aa).

112-118 (GSNGKST) serves as a coordination point for ATP.

The protein belongs to the MurCDEF family.

The protein localises to the cytoplasm. The catalysed reaction is UDP-N-acetyl-alpha-D-muramoyl-L-alanine + D-glutamate + ATP = UDP-N-acetyl-alpha-D-muramoyl-L-alanyl-D-glutamate + ADP + phosphate + H(+). It participates in cell wall biogenesis; peptidoglycan biosynthesis. Functionally, cell wall formation. Catalyzes the addition of glutamate to the nucleotide precursor UDP-N-acetylmuramoyl-L-alanine (UMA). This Haemophilus influenzae (strain PittGG) protein is UDP-N-acetylmuramoylalanine--D-glutamate ligase.